Consider the following 1047-residue polypeptide: Atrial natriuretic peptide receptor 2 (1047 aa).

The N-terminal stretch at 1–16 (MALPSLLLVVAALAGG) is a signal peptide. Residues 17 to 458 (VRPPGARNLT…DKTPLSTLAI (442 aa)) lie on the Extracellular side of the membrane. Residues Asn-24 and Asn-35 are each glycosylated (N-linked (GlcNAc...) asparagine). Cys-75 and Cys-101 are disulfide-bonded. N-linked (GlcNAc...) asparagine glycans are attached at residues Asn-161, Asn-195, Asn-244, Asn-277, and Asn-349. Residues 459–478 (VALGTGITFIMFGVSSFLIF) traverse the membrane as a helical segment. Topologically, residues 479-1047 (RKLMLEKELA…GERKGPAGLL (569 aa)) are cytoplasmic. Phosphoserine is present on Ser-513. In terms of domain architecture, Protein kinase spans 513 to 786 (SRLTLSLRGS…PDFGQIKGFI (274 aa)). The residue at position 516 (Thr-516) is a Phosphothreonine. Phosphoserine occurs at positions 518, 522, 523, and 526. Thr-529 carries the phosphothreonine modification. One can recognise a Guanylate cyclase domain in the interval 861–991 (TIYFSDIVGF…DTVNTASRME (131 aa)).

It belongs to the adenylyl cyclase class-4/guanylyl cyclase family. Post-translationally, phosphorylated. Phosphorylation of the protein kinase-like domain is required for full activation by CNP. Glycosylated.

The protein resides in the cell membrane. The catalysed reaction is GTP = 3',5'-cyclic GMP + diphosphate. Functionally, receptor for the C-type natriuretic peptide NPPC/CNP hormone. Has guanylate cyclase activity upon binding of its ligand. May play a role in the regulation of skeletal growth. The chain is Atrial natriuretic peptide receptor 2 (NPR2) from Bos taurus (Bovine).